A 511-amino-acid polypeptide reads, in one-letter code: Spermatogenesis-associated protein 2 (511 aa).

The region spanning 77-149 (ALHCAFSMLE…AYKLKELVES (73 aa)) is the PUB domain. The PIM motif motif lies at 320-337 (TYFPTQDDVDLYTDSEPR).

The protein belongs to the SPATA2 family. In terms of assembly, interacts (via the PIM motif) with RNF31/HOIP (via the PUB domain); the interaction is direct. Interacts (via the PUB domain) with CYLD; the interaction is direct. As to expression, expressed in the testis and to a lesser extent in the brain, while skeletal muscle and kidney show weak expression.

Its subcellular location is the cytoplasm. The protein resides in the nucleus. Bridging factor that mediates the recruitment of CYLD to the LUBAC complex, thereby regulating TNF-alpha-induced necroptosis. Acts as a direct binding intermediate that bridges RNF31/HOIP, the catalytic subunit of the LUBAC complex, and the deubiquitinase (CYLD), thereby recruiting CYLD to the TNF-R1 signaling complex (TNF-RSC). Required to activate the 'Met-1'- (linear) and 'Lys-63'-linked deubiquitinase activities of CYLD. Controls the kinase activity of RIPK1 and TNF-alpha-induced necroptosis by promoting 'Met-1'-linked deubiquitination of RIPK1 by CYLD. In Rattus norvegicus (Rat), this protein is Spermatogenesis-associated protein 2.